The sequence spans 192 residues: Adenylate kinase (192 aa).

Residue 10–15 coordinates ATP; it reads GSGKGT. The interval 30-59 is NMP; it reads STGDMLREVISRETEVGRKAKAIINAGALV. AMP contacts are provided by residues T31, R36, 57-59, 85-88, and Q92; these read ALV and GYPR. An LID region spans residues 126-142; sequence KRVQETIAVGGQVRSDD. An ATP-binding site is contributed by R127. AMP contacts are provided by R139 and R150. Residue M178 coordinates ATP.

The protein belongs to the adenylate kinase family. Monomer.

The protein resides in the cytoplasm. The catalysed reaction is AMP + ATP = 2 ADP. The protein operates within purine metabolism; AMP biosynthesis via salvage pathway; AMP from ADP: step 1/1. In terms of biological role, catalyzes the reversible transfer of the terminal phosphate group between ATP and AMP. Plays an important role in cellular energy homeostasis and in adenine nucleotide metabolism. The protein is Adenylate kinase of Bartonella quintana (strain Toulouse) (Rochalimaea quintana).